The sequence spans 257 residues: UPF0246 protein Spro_0686 (257 aa).

Belongs to the UPF0246 family.

The sequence is that of UPF0246 protein Spro_0686 from Serratia proteamaculans (strain 568).